The sequence spans 302 residues: Alpha-ketoglutarate-dependent dioxygenase alkB homolog 4 (302 aa).

A2 carries the post-translational modification N-acetylalanine. A Phosphothreonine modification is found at T8. The Fe2OG dioxygenase domain occupies 150–274 (PVEQCNLDYC…RVCVTFRELS (125 aa)). Fe cation-binding residues include H169, D171, and H254. R265 contributes to the 2-oxoglutarate binding site.

The protein belongs to the alkB family. Interacts with ZFHX3, MLLT3, MLLT1, HSF4, EP300, TES, EIF3C, MTMR6 and PSMA6. Fe(2+) serves as cofactor. As to expression, widely expressed, with highest expression in pancreas, ovary and spleen.

Its subcellular location is the cytoplasm. The protein localises to the nucleus. It localises to the nucleolus. It is found in the midbody. It carries out the reaction an N(6)-methyl-2'-deoxyadenosine in DNA + 2-oxoglutarate + O2 = a 2'-deoxyadenosine in DNA + formaldehyde + succinate + CO2. It catalyses the reaction N(6)-methyl-L-lysyl-[protein] + 2-oxoglutarate + O2 = L-lysyl-[protein] + formaldehyde + succinate + CO2. Its function is as follows. Dioxygenase that mediates demethylation of actin monomethylated at 'Lys-84' (K84me1), thereby acting as a regulator of actomyosin-processes. Demethylation of actin K84me1 is required for maintaining actomyosin dynamics supporting normal cleavage furrow ingression during cytokinesis and cell migration. In addition to proteins, also demethylates DNA: specifically demethylates DNA methylated on the 6th position of adenine (N(6)-methyladenosine) DNA, thereby regulating Polycomb silencing. This is Alpha-ketoglutarate-dependent dioxygenase alkB homolog 4 from Homo sapiens (Human).